A 99-amino-acid chain; its full sequence is Large ribosomal subunit protein uL23 (99 aa).

Belongs to the universal ribosomal protein uL23 family. Part of the 50S ribosomal subunit. Contacts protein L29, and trigger factor when it is bound to the ribosome.

One of the early assembly proteins it binds 23S rRNA. One of the proteins that surrounds the polypeptide exit tunnel on the outside of the ribosome. Forms the main docking site for trigger factor binding to the ribosome. This chain is Large ribosomal subunit protein uL23, found in Francisella philomiragia subsp. philomiragia (strain ATCC 25017 / CCUG 19701 / FSC 153 / O#319-036).